Here is a 428-residue protein sequence, read N- to C-terminus: Large envelope protein (428 aa).

G2 carries N-myristoyl glycine; by host lipidation. The pre-S1 stretch occupies residues G2–L145. The tract at residues G2–S204 is pre-S. Topologically, residues G2–G211 are virion surface; in external conformation. Residues G2–R283 lie on the Intravirion; in internal conformation side of the membrane. N-linked (GlcNAc...) asparagine glycosylation occurs at N3. The disordered stretch occupies residues R110–H144. The pre-S2 stretch occupies residues T146–S204. A helical membrane pass occupies residues L212 to I232. Residues A233–R283 are Intravirion; in external conformation-facing. Residues F284–W304 traverse the membrane as a helical segment. Over K305–S376 the chain is Virion surface. The N-linked (GlcNAc...) asparagine; by host glycan is linked to N348. Residues L377 to I397 traverse the membrane as a helical segment. At W398–W403 the chain is on the intravirion side. A helical transmembrane segment spans residues G404–A426. Topologically, residues Y427–I428 are virion surface.

This sequence belongs to the orthohepadnavirus major surface antigen family. In terms of assembly, in its internal form (Li-HBsAg), interacts with the capsid protein and with the isoform S. Interacts with host chaperone CANX. Associates with host chaperone CANX through its pre-S2 N glycan; this association may be essential for isoform M proper secretion. As to quaternary structure, interacts with isoform L. Interacts with the antigens of satellite virus HDV (HDVAgs); this interaction is required for encapsidation of HDV genomic RNA. Isoform M is N-terminally acetylated by host at a ratio of 90%, and N-glycosylated by host at the pre-S2 region. In terms of processing, myristoylated.

The protein localises to the virion membrane. Its function is as follows. The large envelope protein exists in two topological conformations, one which is termed 'external' or Le-HBsAg and the other 'internal' or Li-HBsAg. In its external conformation the protein attaches the virus to cell receptors and thereby initiating infection. This interaction determines the species specificity and liver tropism. This attachment induces virion internalization predominantly through caveolin-mediated endocytosis. The large envelope protein also assures fusion between virion membrane and endosomal membrane. In its internal conformation the protein plays a role in virion morphogenesis and mediates the contact with the nucleocapsid like a matrix protein. Functionally, the middle envelope protein plays an important role in the budding of the virion. It is involved in the induction of budding in a nucleocapsid independent way. In this process the majority of envelope proteins bud to form subviral lipoprotein particles of 22 nm of diameter that do not contain a nucleocapsid. This is Large envelope protein from Ground squirrel hepatitis virus (strain 27) (GSHV).